Consider the following 475-residue polypeptide: Cytochrome c-552 (475 aa).

A signal peptide spans 1–29 (MSIKHWMSAPIAVATLFASQLLLAGSVLA). The segment at 38–57 (PRNDAFEQKHPDQYHSWKAT) is disordered. His-92 lines the heme c pocket. 3 residues coordinate heme: Cys-120, Cys-123, and Lys-124. 6 residues coordinate heme c: Cys-158, Cys-161, His-162, Cys-207, Cys-210, and His-211. Residues Glu-213, Tyr-214, Lys-259, and Gln-261 each contribute to the Ca(2+) site. Residue Tyr-214 participates in substrate binding. His-262 contributes to the substrate binding site. Residues His-273, Cys-280, Cys-283, His-284, His-299, Cys-312, Cys-315, His-316, and His-391 each coordinate heme c.

This sequence belongs to the cytochrome c-552 family. Ca(2+) is required as a cofactor. Heme c serves as cofactor.

It localises to the periplasm. It carries out the reaction 6 Fe(III)-[cytochrome c] + NH4(+) + 2 H2O = 6 Fe(II)-[cytochrome c] + nitrite + 8 H(+). The protein operates within nitrogen metabolism; nitrate reduction (assimilation). Its function is as follows. Catalyzes the reduction of nitrite to ammonia, consuming six electrons in the process. The polypeptide is Cytochrome c-552 (Vibrio parahaemolyticus serotype O3:K6 (strain RIMD 2210633)).